Reading from the N-terminus, the 163-residue chain is MPSFDIVSEVDLQEARNGVDNAVREVESRFDFRGVEATIELNDANKTIKVLSESDFQVNQLLDILRAKLLKRGIEGASLDVPDEFVHSGKTWYVEAKLKQGIESAVQKKIVKLIKDSKLKVQAQIQGEEIRVTGKSRDDLQSVMALVRGDDLGQPFQFKNFRD.

Belongs to the YajQ family.

Nucleotide-binding protein. The sequence is that of Nucleotide-binding protein YajQ from Salmonella typhi.